Here is a 68-residue protein sequence, read N- to C-terminus: Antimicrobial peptide Eval418 (68 aa).

The signal sequence occupies residues 1–23 (MRTQLAVLLVALVLLQMIAQSEA). Position 36 is an isoleucine amide (isoleucine 36). A propeptide spanning residues 37-68 (GKRGLRNLDDLDDVFDDDLSAADLEFLKQLMR) is cleaved from the precursor.

The protein belongs to the non-disulfide-bridged peptide (NDBP) superfamily. Short antimicrobial peptide (group 4) family. As to expression, expressed by the venom gland.

Its subcellular location is the secreted. In terms of biological role, probable antimicrobial peptide. Shows dose-dependent and time-dependent inactivation of herpes simplex virus type 1 (HSV-1) and dose-dependent inhibition of HSV-1 viral attachment to host cells. Scarcely suppress an established HSV-1 infection due to poor cellular uptake. This Euscorpiops validus (Scorpion) protein is Antimicrobial peptide Eval418.